Here is a 70-residue protein sequence, read N- to C-terminus: Small ribosomal subunit protein bS21B (70 aa).

The protein belongs to the bacterial ribosomal protein bS21 family.

The polypeptide is Small ribosomal subunit protein bS21B (rpsU2) (Rhizobium meliloti (strain 1021) (Ensifer meliloti)).